Reading from the N-terminus, the 451-residue chain is Glycosyltransferase-like At2g41451 (451 aa).

An N-terminal signal peptide occupies residues 1–23 (MASSDSSYSRKFLLITFLPLSLA). N-linked (GlcNAc...) asparagine glycans are attached at residues Asn36, Asn137, Asn168, Asn441, and Asn444. Positions 109 to 345 (QTLPWIFYHK…TYSKFSDLTS (237 aa)) constitute a GT92 domain.

Belongs to the glycosyltransferase 92 family.

The protein localises to the secreted. Its subcellular location is the cell wall. It is found in the cytoplasm. It localises to the cell membrane. Functionally, involved in the coordination between cell elongation and cellulose synthesis by promoting the expression of genes involved in cell elongation and cellulose synthesis. Acts as a regulator of plasmodesmatal permeability. Maybe a glycosyltransferase. This Arabidopsis thaliana (Mouse-ear cress) protein is Glycosyltransferase-like At2g41451.